The chain runs to 300 residues: B1 kinase (300 aa).

The region spanning 16 to 282 (WVVGPLIGKG…ITMVNSLTYF (267 aa)) is the Protein kinase domain. Residues 22–30 (IGKGGFGSI) and Lys-45 contribute to the ATP site. Catalysis depends on Asn-147, which acts as the Proton acceptor.

It belongs to the protein kinase superfamily. Ser/Thr protein kinase family. Poxviruses subfamily. In terms of assembly, interacts with host JIP1; this interaction increases the amount of MAPK bound to JIP1 and subsequently increases the activity of transcription factors, such as JUN, that respond to these complexes. Interacts with protein OPG198; this interaction inhibits the repressive activity of OPG198 pseudokinase on viral replication factory formation. It depends on Mg(2+) as a cofactor. Autophosphorylated.

It is found in the virion. The protein resides in the host cytoplasm. It carries out the reaction L-seryl-[protein] + ATP = O-phospho-L-seryl-[protein] + ADP + H(+). The catalysed reaction is L-threonyl-[protein] + ATP = O-phospho-L-threonyl-[protein] + ADP + H(+). In terms of biological role, essential serine/threonine-protein kinase that plays different role in the viral life cycle. Phosphorylates the host small ribosomal protein RACK1 thereby customizing the ribosomes to a state optimal for viral mRNAs (which contain poly-A leaders) but not for host mRNAs. Facilitates viral DNA replication by inhibiting host BANF1, a cellular host defense responsive to foreign DNA. Phosphorylates host BANF1 on serine and threonine residues; this leads to BANF1 relocalization to the cytoplasm, loss of dimerization and impaired DNA binding activity. Indeed, BANF1 activity depends on its DNA-binding property which is blocked by VPK1-mediated phosphorylation. Required for viral intermediate genes expression, probably by inhibiting host BANF1. Modulates cellular responses via host JUN by two different mechanisms, either by direct phosphorylation or by modulation of upstream JIP1-MAPK complexes. Seems to participate in the accumulation/processing of late proteins and thus in virion maturation. In addition, inhibits B12 repressive activity on viral DNA replication via a phosphorylation-dependent mechanism. The chain is B1 kinase (OPG187) from Homo sapiens (Human).